The following is a 523-amino-acid chain: GMP synthase [glutamine-hydrolyzing] (523 aa).

A Glutamine amidotransferase type-1 domain is found at 9–198 (PVLVVDFGAQ…LTEIAGLEQN (190 aa)). The Nucleophile role is filled by Cys-86. Residues His-172 and Glu-174 contribute to the active site. The region spanning 199–397 (WTAANIAEEL…LGLPEEIVGR (199 aa)) is the GMPS ATP-PPase domain. 227–233 (SGGVDSA) is a binding site for ATP.

As to quaternary structure, homodimer.

It carries out the reaction XMP + L-glutamine + ATP + H2O = GMP + L-glutamate + AMP + diphosphate + 2 H(+). The protein operates within purine metabolism; GMP biosynthesis; GMP from XMP (L-Gln route): step 1/1. Catalyzes the synthesis of GMP from XMP. This is GMP synthase [glutamine-hydrolyzing] from Corynebacterium glutamicum (strain R).